A 204-amino-acid polypeptide reads, in one-letter code: Flavin-dependent thymidylate synthase (204 aa).

The ThyX domain maps to 1-204; sequence MTVTLMQHTS…RYLFCLNQEG (204 aa). FAD-binding positions include S50 and 74–76; that span reads RHR. DUMP-binding positions include 71-74, 84-86, and K143; these read ELAR and SSR. Positions 74 to 84 match the ThyX motif motif; that stretch reads RHRIASLSVKS. Residues 159 to 161 and N165 each bind FAD; that span reads NAR. R170 contributes to the dUMP binding site. R170 (involved in ionization of N3 of dUMP, leading to its activation) is an active-site residue.

Belongs to the thymidylate synthase ThyX family. Homotetramer. FAD is required as a cofactor.

It catalyses the reaction dUMP + (6R)-5,10-methylene-5,6,7,8-tetrahydrofolate + NADPH + H(+) = dTMP + (6S)-5,6,7,8-tetrahydrofolate + NADP(+). Its pathway is pyrimidine metabolism; dTTP biosynthesis. Functionally, catalyzes the reductive methylation of 2'-deoxyuridine-5'-monophosphate (dUMP) to 2'-deoxythymidine-5'-monophosphate (dTMP) while utilizing 5,10-methylenetetrahydrofolate (mTHF) as the methyl donor, and NADPH and FADH(2) as the reductant. In Wolinella succinogenes (strain ATCC 29543 / DSM 1740 / CCUG 13145 / JCM 31913 / LMG 7466 / NCTC 11488 / FDC 602W) (Vibrio succinogenes), this protein is Flavin-dependent thymidylate synthase.